The following is a 243-amino-acid chain: Exosome complex component Rrp41 (243 aa).

It belongs to the RNase PH family. Rrp41 subfamily. In terms of assembly, component of the archaeal exosome complex. Forms a hexameric ring-like arrangement composed of 3 Rrp41-Rrp42 heterodimers. The hexameric ring associates with a trimer of Rrp4 and/or Csl4 subunits.

Its subcellular location is the cytoplasm. Catalytic component of the exosome, which is a complex involved in RNA degradation. Has 3'-&gt;5' exoribonuclease activity. Can also synthesize heteromeric RNA-tails. The sequence is that of Exosome complex component Rrp41 from Cenarchaeum symbiosum (strain A).